Here is a 420-residue protein sequence, read N- to C-terminus: Bone morphogenetic protein 2 (420 aa).

An N-terminal signal peptide occupies residues 1–23 (MVAVVRSLMVLLLAQVLLEGATG). Residues 24 to 303 (LIPEVGRRRY…DSVLHTREKR (280 aa)) constitute a propeptide that is removed on maturation. 5 N-linked (GlcNAc...) asparagine glycosylation sites follow: N138, N167, N168, N172, and N362. 3 disulfides stabilise this stretch: C320-C385, C349-C417, and C353-C419.

It belongs to the TGF-beta family. As to quaternary structure, homodimer; disulfide-linked.

It is found in the secreted. Its function is as follows. Induces cartilage and bone formation. This Tetraodon nigroviridis (Spotted green pufferfish) protein is Bone morphogenetic protein 2 (bmp2).